Consider the following 657-residue polypeptide: Glycogen debranching enzyme (657 aa).

Asp336 (nucleophile) is an active-site residue. Glu371 acts as the Proton donor in catalysis. Residues 458–467 (NEANGEENRD) show a composition bias toward basic and acidic residues. The segment at 458–479 (NEANGEENRDGTNNNYSNNHGK) is disordered.

Belongs to the glycosyl hydrolase 13 family.

The catalysed reaction is Hydrolysis of (1-&gt;6)-alpha-D-glucosidic linkages to branches with degrees of polymerization of three or four glucose residues in limit dextrin.. It participates in glycan degradation; glycogen degradation. Functionally, removes maltotriose and maltotetraose chains that are attached by 1,6-alpha-linkage to the limit dextrin main chain, generating a debranched limit dextrin. This is Glycogen debranching enzyme from Escherichia coli O8 (strain IAI1).